We begin with the raw amino-acid sequence, 329 residues long: uncharacterized protein (329 aa).

In terms of domain architecture, SIS spans 37-180; that stretch reads LAEKILGHSG…AMLLFHSRGV (144 aa). 52–57 is a binding site for ATP; sequence GVGKSG. CBS domains are found at residues 206 to 265 and 274 to 329; these read MFPK…GGEV and MTAN…AGLL.

It belongs to the SIS family. GutQ/KpsF subfamily.

This is an uncharacterized protein from Chlamydia pneumoniae (Chlamydophila pneumoniae).